The following is a 1184-amino-acid chain: Nucleolar protein 6 (1184 aa).

Residues 1 to 10 (MGRIKEKESK) are compositionally biased toward basic and acidic residues. Disordered regions lie at residues 1–42 (MGRI…NRVP) and 1133–1184 (REQR…NALC).

The protein belongs to the NRAP family. Part of the small subunit (SSU) processome, composed of more than 70 proteins and the RNA chaperone small nucleolar RNA (snoRNA) U3.

The protein resides in the nucleus. It is found in the nucleolus. Its subcellular location is the chromosome. Functionally, part of the small subunit (SSU) processome, first precursor of the small eukaryotic ribosomal subunit. During the assembly of the SSU processome in the nucleolus, many ribosome biogenesis factors, an RNA chaperone and ribosomal proteins associate with the nascent pre-rRNA and work in concert to generate RNA folding, modifications, rearrangements and cleavage as well as targeted degradation of pre-ribosomal RNA by the RNA exosome. This is Nucleolar protein 6 from Drosophila virilis (Fruit fly).